Consider the following 750-residue polypeptide: Ribosomal RNA large subunit methyltransferase K/L (750 aa).

A THUMP domain is found at 46-157; sequence TAYRLCLWSR…RGEAILSLDL (112 aa).

The protein belongs to the methyltransferase superfamily. RlmKL family.

The protein localises to the cytoplasm. The enzyme catalyses guanosine(2445) in 23S rRNA + S-adenosyl-L-methionine = N(2)-methylguanosine(2445) in 23S rRNA + S-adenosyl-L-homocysteine + H(+). The catalysed reaction is guanosine(2069) in 23S rRNA + S-adenosyl-L-methionine = N(2)-methylguanosine(2069) in 23S rRNA + S-adenosyl-L-homocysteine + H(+). Specifically methylates the guanine in position 2445 (m2G2445) and the guanine in position 2069 (m7G2069) of 23S rRNA. The sequence is that of Ribosomal RNA large subunit methyltransferase K/L from Pseudomonas syringae pv. syringae (strain B728a).